A 121-amino-acid polypeptide reads, in one-letter code: Aspartate 1-decarboxylase (121 aa).

Residue S25 is the Schiff-base intermediate with substrate; via pyruvic acid of the active site. The residue at position 25 (S25) is a Pyruvic acid (Ser). T57 contributes to the substrate binding site. Y58 functions as the Proton donor in the catalytic mechanism. Position 73 to 75 (73 to 75) interacts with substrate; it reads GAA.

Belongs to the PanD family. In terms of assembly, heterooctamer of four alpha and four beta subunits. Pyruvate serves as cofactor. Post-translationally, is synthesized initially as an inactive proenzyme, which is activated by self-cleavage at a specific serine bond to produce a beta-subunit with a hydroxyl group at its C-terminus and an alpha-subunit with a pyruvoyl group at its N-terminus.

The protein resides in the cytoplasm. It catalyses the reaction L-aspartate + H(+) = beta-alanine + CO2. It participates in cofactor biosynthesis; (R)-pantothenate biosynthesis; beta-alanine from L-aspartate: step 1/1. Catalyzes the pyruvoyl-dependent decarboxylation of aspartate to produce beta-alanine. The protein is Aspartate 1-decarboxylase of Sulfurimonas denitrificans (strain ATCC 33889 / DSM 1251) (Thiomicrospira denitrificans (strain ATCC 33889 / DSM 1251)).